The sequence spans 118 residues: uncharacterized protein (118 aa).

An N-terminal signal peptide occupies residues M1–A22. Residues T41 to S71 adopt a coiled-coil conformation.

This is an uncharacterized protein from Schizosaccharomyces pombe (strain 972 / ATCC 24843) (Fission yeast).